The chain runs to 234 residues: Bradykinin-releasing enzyme KR-E-1 (234 aa).

One can recognise a Peptidase S1 domain in the interval 1–225 (VIGGDECNIN…YSDWIQSIIA (225 aa)). Cystine bridges form between C7–C139, C26–C42, C74–C232, C118–C186, C150–C165, and C176–C201. N20 is a glycosylation site (N-linked (GlcNAc...) asparagine). Active-site charge relay system residues include H41 and D86. The Charge relay system role is filled by S180.

Belongs to the peptidase S1 family. Snake venom subfamily. As to quaternary structure, monomer. In terms of tissue distribution, expressed by the venom gland.

The protein resides in the secreted. Functionally, bradykinin-releasing enzyme. Releases bradykinin from bovine HMW kininogen. Has anticoagulant activity. Increases permeability of capillaries by intradermal injection into rabbits. The chain is Bradykinin-releasing enzyme KR-E-1 from Gloydius ussuriensis (Ussuri mamushi).